A 357-amino-acid polypeptide reads, in one-letter code: Guanine nucleotide-binding protein alpha-1 subunit (357 aa).

G2 is lipidated: N-myristoyl glycine. A lipid anchor (S-palmitoyl cysteine) is attached at C4. The G-alpha domain maps to 32 to 357 (NIIKLLLLGA…STKLKGCGLY (326 aa)). Positions 35–48 (KLLLLGAGESGKST) are G1 motif. 14 residues coordinate GTP: E43, S44, G45, K46, S47, T48, D151, L176, T182, G204, N270, K271, D273, and A329. Residue S47 coordinates Mg(2+). The interval 174 to 182 (DILHTRVPT) is G2 motif. Position 182 (T182) interacts with Mg(2+). The G3 motif stretch occupies residues 197 to 206 (FRVFDVGGQR). The segment at 266–273 (ILFLNKID) is G4 motif. Positions 327–332 (TCATDT) are G5 motif.

It belongs to the G-alpha family. As to quaternary structure, g proteins are composed of 3 units; alpha, beta and gamma. The alpha chain contains the guanine nucleotide binding site. Mg(2+) serves as cofactor.

Its function is as follows. Guanine nucleotide-binding proteins (G proteins) are involved as modulators or transducers in various transmembrane signaling systems. This is Guanine nucleotide-binding protein alpha-1 subunit (gpa-1) from Caenorhabditis elegans.